We begin with the raw amino-acid sequence, 289 residues long: O-methyltransferase asqN (289 aa).

D155 serves as a coordination point for S-adenosyl-L-methionine. H195 functions as the Proton acceptor in the catalytic mechanism.

The protein belongs to the class I-like SAM-binding methyltransferase superfamily. Cation-independent O-methyltransferase family.

It functions in the pathway secondary metabolite biosynthesis. It participates in alkaloid biosynthesis. The protein operates within mycotoxin biosynthesis. In terms of biological role, O-methyltransferase; part of the gene cluster that mediates the biosynthesis of the aspoquinolone mycotoxins. The role of asqN within the aspoquinolone pathway has still to be determined. The first step of the pathway is catalyzed by the nonribosomal peptide synthetase asqK that condenses anthranilic acid and O-methyl-L-tyrosine to produce 4'-methoxycyclopeptin. 4'-methoxycyclopeptin is then converted to 4'-methoxydehydrocyclopeptin by the ketoglutarate-dependent dioxygenase asqJ. AsqJ also converts its first product 4'-methoxydehydrocyclopeptin to 4'-methoxycyclopenin. The following conversion of 4'-methoxycyclopenin into 4'-methoxyviridicatin is catalyzed by the cyclopenase asqI. 4'-methoxyviridicatin is the precursor of quinolone natural products, and is further converted to quinolinone B. The prenyltransferase asqH1 then catalyzes the canonical Friedel-Crafts alkylation of quinolinone B with dimethylallyl cation to yield dimethylallyl quinolone, which is subjected to FAD-dependent dehydrogenation by the FAD-linked oxidoreductase asqF to yield conjugated aryl diene. The delta(3') double bond then serves as the site of the second alkylation with DMAPP catalyzed by the prenyltransferase asqH2 to yield a carbenium ion intermediate, which can be attacked by H(2)O to yield a styrenyl quinolone containing a C3'-hydroxyprenyl chain. The FAD-dependent monooxygenase asqG performs epoxidation of the terminal C7'-C8' olefin. Finally, after dehydratation of the epoxide at C3 by asqC, the quinolone epoxide rearrangement protein asqO catalyzes an enzymatic 3-exo-tet cyclization to yield the cyclopropyl-THF ring system in aspoquinolone. The polypeptide is O-methyltransferase asqN (Emericella nidulans (strain FGSC A4 / ATCC 38163 / CBS 112.46 / NRRL 194 / M139) (Aspergillus nidulans)).